Consider the following 437-residue polypeptide: Methylenetetrahydrofolate--tRNA-(uracil-5-)-methyltransferase TrmFO (437 aa).

Residue 10-15 coordinates FAD; it reads GAGLAG.

It belongs to the MnmG family. TrmFO subfamily. FAD serves as cofactor.

It localises to the cytoplasm. The catalysed reaction is uridine(54) in tRNA + (6R)-5,10-methylene-5,6,7,8-tetrahydrofolate + NADH + H(+) = 5-methyluridine(54) in tRNA + (6S)-5,6,7,8-tetrahydrofolate + NAD(+). It catalyses the reaction uridine(54) in tRNA + (6R)-5,10-methylene-5,6,7,8-tetrahydrofolate + NADPH + H(+) = 5-methyluridine(54) in tRNA + (6S)-5,6,7,8-tetrahydrofolate + NADP(+). Functionally, catalyzes the folate-dependent formation of 5-methyl-uridine at position 54 (M-5-U54) in all tRNAs. The chain is Methylenetetrahydrofolate--tRNA-(uracil-5-)-methyltransferase TrmFO from Lysinibacillus sphaericus (strain C3-41).